Reading from the N-terminus, the 754-residue chain is Disintegrin and metalloproteinase domain-containing protein 32 (754 aa).

Positions 1 to 22 are cleaved as a signal peptide; the sequence is MLGAMLHTLLLLLLAELGALLA. S23 carries the post-translational modification Phosphoserine. Residues 23-176 constitute a propeptide that is removed on maturation; sequence SGPESQSSFL…TNYGILINKK (154 aa). A glycan (N-linked (GlcNAc...) asparagine) is linked at N126. At 177-689 the chain is on the extracellular side; that stretch reads PKSPFKNLFP…ERASKNQEKK (513 aa). The Peptidase M12B domain occupies 187-384; the sequence is LYLEMSIVVD…EGAKCLQNKP (198 aa). Cystine bridges form between C296–C379, C338–C363, C340–C345, and C454–C475. N362, N469, N570, and N571 each carry an N-linked (GlcNAc...) asparagine glycan. A Disintegrin domain is found at 391 to 483; the sequence is AAVCGNGKVE…NCPPDVTINN (93 aa). Residues 628–660 form the EGF-like domain; that stretch reads QSKTCSSKCHGNGVCNSHGVCHCNAGYSPPNCQ. 3 disulfides stabilise this stretch: C632–C642, C636–C648, and C650–C659. A helical transmembrane segment spans residues 690–710; sequence WLLSLYIVLIILASVFLIGTG. Residues 711 to 754 lie on the Cytoplasmic side of the membrane; the sequence is WKGLKQCGSKEEESMSSESKSEDSTYTYVSRSTSETSSMTSTSS. Positions 720 to 733 are enriched in basic and acidic residues; it reads KEEESMSSESKSED. Residues 720 to 754 are disordered; the sequence is KEEESMSSESKSEDSTYTYVSRSTSETSSMTSTSS. Residues 734–754 are compositionally biased toward low complexity; the sequence is STYTYVSRSTSETSSMTSTSS.

In terms of tissue distribution, expressed in sperm (at protein level). Highly expressed in the testis and weakly expressed in the epididymis, brain and heart.

Its subcellular location is the membrane. Functionally, may play a role in sperm development and fertilization This is a non-catalytic metalloprotease-like protein. This Mus musculus (Mouse) protein is Disintegrin and metalloproteinase domain-containing protein 32.